Reading from the N-terminus, the 294-residue chain is tRNA pseudouridine synthase B (294 aa).

Residue Asp-39 is the Nucleophile of the active site.

The protein belongs to the pseudouridine synthase TruB family. Type 1 subfamily.

It carries out the reaction uridine(55) in tRNA = pseudouridine(55) in tRNA. Its function is as follows. Responsible for synthesis of pseudouridine from uracil-55 in the psi GC loop of transfer RNAs. This chain is tRNA pseudouridine synthase B, found in Streptococcus agalactiae serotype Ia (strain ATCC 27591 / A909 / CDC SS700).